Consider the following 141-residue polypeptide: Large ribosomal subunit protein uL11 (141 aa).

It belongs to the universal ribosomal protein uL11 family. In terms of assembly, part of the ribosomal stalk of the 50S ribosomal subunit. Interacts with L10 and the large rRNA to form the base of the stalk. L10 forms an elongated spine to which L12 dimers bind in a sequential fashion forming a multimeric L10(L12)X complex. Post-translationally, one or more lysine residues are methylated.

In terms of biological role, forms part of the ribosomal stalk which helps the ribosome interact with GTP-bound translation factors. The chain is Large ribosomal subunit protein uL11 from Natranaerobius thermophilus (strain ATCC BAA-1301 / DSM 18059 / JW/NM-WN-LF).